A 419-amino-acid chain; its full sequence is Ribosomal RNA large subunit methyltransferase G (419 aa).

Basic and acidic residues predominate over residues 386–408 (KAEPFETHPTEAEAKVEVTESKP). The segment at 386 to 419 (KAEPFETHPTEAEAKVEVTESKPHPQSSLYGTKK) is disordered. Residues 409 to 419 (HPQSSLYGTKK) show a composition bias toward polar residues.

This sequence belongs to the methyltransferase superfamily. RlmG family.

It is found in the cytoplasm. The catalysed reaction is guanosine(1835) in 23S rRNA + S-adenosyl-L-methionine = N(2)-methylguanosine(1835) in 23S rRNA + S-adenosyl-L-homocysteine + H(+). Functionally, specifically methylates the guanine in position 1835 (m2G1835) of 23S rRNA. The polypeptide is Ribosomal RNA large subunit methyltransferase G (Shewanella woodyi (strain ATCC 51908 / MS32)).